A 232-amino-acid chain; its full sequence is Lipid A 1-phosphatase (232 aa).

6 helical membrane-spanning segments follow: residues 10–30 (LFIT…PVGA), 42–62 (ELLT…LLFF), 80–100 (ALYV…SGLL), 136–156 (FPSG…LLFP), 160–180 (VAFI…GAHY), and 183–203 (DVIA…IVYA).

Belongs to the lipid A LpxE 1-phosphatase family.

It localises to the cell inner membrane. It participates in bacterial outer membrane biogenesis; LPS lipid A biosynthesis. Functionally, probably removes the 1-phosphate moiety from lipid A species. Does not seem to act on other membrane components, nor does it dephosphorylate the 4'-phosphate group of lipid A and/or lipid A precursors. The chain is Lipid A 1-phosphatase from Rhizobium etli (strain ATCC 51251 / DSM 11541 / JCM 21823 / NBRC 15573 / CFN 42).